The sequence spans 446 residues: Keratin, type I cytoskeletal 25 (446 aa).

A disordered region spans residues 1–20; that stretch reads MSLRLSSGSKRSYARPSTGS. The head stretch occupies residues 1–74; it reads MSLRLSSGSK…VNEGGLLSGN (74 aa). A coil 1A region spans residues 75-110; sequence EKVTMQNLNDRLASYLDNVQALQEANADLEQKIKGW. The IF rod domain occupies 75 to 390; the sequence is EKVTMQNLND…LLIGGDEGAC (316 aa). The interval 111-132 is linker 1; that stretch reads YEKFGPGSCRGLDHDYSRYFPI. Residues 133 to 224 are coil 1B; that stretch reads IDDLKNQIIT…KNHKEEMQAL (92 aa). The segment at 225–247 is linker 12; the sequence is QCAAGGNVNVEMNAAPGVDLTVL. The segment at 248–386 is coil 2; sequence LNNMRAEYEA…ETYCLLIGGD (139 aa). Residues 387–446 form a tail region; sequence EGACKSSSYKSKDYTSGNAGNQSKDSPKAIVVKKVLEEVDQRSKILTTRLHSLEEKSQSN. The segment at 394–413 is disordered; sequence SYKSKDYTSGNAGNQSKDSP. Over residues 400–410 the composition is skewed to polar residues; it reads YTSGNAGNQSK. Residue Ser438 is modified to Phosphoserine.

This sequence belongs to the intermediate filament family. Heterodimer of a type I and a type II keratin. Heterodimer with type II keratin KRT5 leading to the formation of keratin intermediate filament (KIF) network. Interacts with KRT6A to form filaments.

It is found in the cytoplasm. Its function is as follows. Essential for the proper assembly of type I and type II keratin protein complexes and formation of keratin intermediate filaments in the inner root sheath (irs). Plays a role in the cytoskeleton organization. This is Keratin, type I cytoskeletal 25 from Rattus norvegicus (Rat).